Reading from the N-terminus, the 591-residue chain is Probable translation initiation factor IF-2 (591 aa).

Residues 6 to 220 form the tr-type G domain; it reads IRTPIVCVMG…IMIGLAQRYM (215 aa). Residues 15–22 are G1; it reads GHVDHGKT. Residue 15–22 participates in GTP binding; it reads GHVDHGKT. The tract at residues 40–44 is G2; sequence AITQH. Residues 76 to 79 form a G3 region; it reads DTPG. GTP is bound by residues 76 to 80 and 130 to 133; these read DTPGH and TKVD. The interval 130–133 is G4; sequence TKVD. Positions 198–200 are G5; the sequence is SAH.

This sequence belongs to the TRAFAC class translation factor GTPase superfamily. Classic translation factor GTPase family. IF-2 subfamily.

Its function is as follows. Function in general translation initiation by promoting the binding of the formylmethionine-tRNA to ribosomes. Seems to function along with eIF-2. The protein is Probable translation initiation factor IF-2 of Methanoregula boonei (strain DSM 21154 / JCM 14090 / 6A8).